Reading from the N-terminus, the 124-residue chain is Glycine cleavage system H protein (124 aa).

The region spanning 19–101 (VATVGITDHA…ESGAWFFRMT (83 aa)) is the Lipoyl-binding domain. The residue at position 60 (Lys-60) is an N6-lipoyllysine.

Belongs to the GcvH family. The glycine cleavage system is composed of four proteins: P, T, L and H. Requires (R)-lipoate as cofactor.

Functionally, the glycine cleavage system catalyzes the degradation of glycine. The H protein shuttles the methylamine group of glycine from the P protein to the T protein. The sequence is that of Glycine cleavage system H protein from Acidiphilium cryptum (strain JF-5).